The sequence spans 353 residues: Photosystem II protein D1 (353 aa).

Position 2 is an N-acetylthreonine (Thr2). Thr2 is modified (phosphothreonine). 3 helical membrane passes run 29-46 (YIGW…TATS), 118-133 (HFLL…EWEL), and 142-156 (WIAV…AATA). His118 provides a ligand contact to chlorophyll a. Tyr126 lines the pheophytin a pocket. [CaMn4O5] cluster is bound by residues Asp170 and Glu189. The chain crosses the membrane as a helical span at residues 197–218 (FHMLGVAGVFGGSLFSAMHGSL). Residue His198 participates in chlorophyll a binding. A quinone contacts are provided by residues His215 and 264-265 (SF). A Fe cation-binding site is contributed by His215. A Fe cation-binding site is contributed by His272. A helical membrane pass occupies residues 274-288 (FLAAWPVVGIWFTAL). Residues His332, Glu333, Asp342, and Ala344 each coordinate [CaMn4O5] cluster. A propeptide spanning residues 345-353 (SVEAPSINA) is cleaved from the precursor.

This sequence belongs to the reaction center PufL/M/PsbA/D family. In terms of assembly, PSII is composed of 1 copy each of membrane proteins PsbA, PsbB, PsbC, PsbD, PsbE, PsbF, PsbH, PsbI, PsbJ, PsbK, PsbL, PsbM, PsbT, PsbX, PsbY, PsbZ, Psb30/Ycf12, at least 3 peripheral proteins of the oxygen-evolving complex and a large number of cofactors. It forms dimeric complexes. The D1/D2 heterodimer binds P680, chlorophylls that are the primary electron donor of PSII, and subsequent electron acceptors. It shares a non-heme iron and each subunit binds pheophytin, quinone, additional chlorophylls, carotenoids and lipids. D1 provides most of the ligands for the Mn4-Ca-O5 cluster of the oxygen-evolving complex (OEC). There is also a Cl(-1) ion associated with D1 and D2, which is required for oxygen evolution. The PSII complex binds additional chlorophylls, carotenoids and specific lipids. serves as cofactor. In terms of processing, tyr-161 forms a radical intermediate that is referred to as redox-active TyrZ, YZ or Y-Z. C-terminally processed by CTPA; processing is essential to allow assembly of the oxygen-evolving complex and thus photosynthetic growth.

It localises to the plastid. It is found in the chloroplast thylakoid membrane. The enzyme catalyses 2 a plastoquinone + 4 hnu + 2 H2O = 2 a plastoquinol + O2. Functionally, photosystem II (PSII) is a light-driven water:plastoquinone oxidoreductase that uses light energy to abstract electrons from H(2)O, generating O(2) and a proton gradient subsequently used for ATP formation. It consists of a core antenna complex that captures photons, and an electron transfer chain that converts photonic excitation into a charge separation. The D1/D2 (PsbA/PsbD) reaction center heterodimer binds P680, the primary electron donor of PSII as well as several subsequent electron acceptors. The chain is Photosystem II protein D1 from Chara vulgaris (Common stonewort).